Here is an 802-residue protein sequence, read N- to C-terminus: Leucine--tRNA ligase (802 aa).

A 'HIGH' region motif is present at residues 40–51 (PYPSGAGLHVGH). Residues 576–580 (KMSKS) carry the 'KMSKS' region motif. Lys-579 serves as a coordination point for ATP.

Belongs to the class-I aminoacyl-tRNA synthetase family.

The protein resides in the cytoplasm. It catalyses the reaction tRNA(Leu) + L-leucine + ATP = L-leucyl-tRNA(Leu) + AMP + diphosphate. The sequence is that of Leucine--tRNA ligase from Bacillus cereus (strain G9842).